Reading from the N-terminus, the 251-residue chain is Imidazole glycerol phosphate synthase subunit HisF (251 aa).

Active-site residues include aspartate 12 and aspartate 131.

It belongs to the HisA/HisF family. Heterodimer of HisH and HisF.

The protein localises to the cytoplasm. The enzyme catalyses 5-[(5-phospho-1-deoxy-D-ribulos-1-ylimino)methylamino]-1-(5-phospho-beta-D-ribosyl)imidazole-4-carboxamide + L-glutamine = D-erythro-1-(imidazol-4-yl)glycerol 3-phosphate + 5-amino-1-(5-phospho-beta-D-ribosyl)imidazole-4-carboxamide + L-glutamate + H(+). Its pathway is amino-acid biosynthesis; L-histidine biosynthesis; L-histidine from 5-phospho-alpha-D-ribose 1-diphosphate: step 5/9. In terms of biological role, IGPS catalyzes the conversion of PRFAR and glutamine to IGP, AICAR and glutamate. The HisF subunit catalyzes the cyclization activity that produces IGP and AICAR from PRFAR using the ammonia provided by the HisH subunit. This is Imidazole glycerol phosphate synthase subunit HisF from Streptomyces griseus subsp. griseus (strain JCM 4626 / CBS 651.72 / NBRC 13350 / KCC S-0626 / ISP 5235).